A 364-amino-acid chain; its full sequence is Serine/threonine-protein kinase ENV7 (364 aa).

3 S-palmitoyl cysteine lipidation sites follow: Cys-13, Cys-14, and Cys-15. The 335-residue stretch at 30–364 (YRIQRLLGEG…LLNLLQDLDT (335 aa)) folds into the Protein kinase domain. ATP contacts are provided by residues 36-44 (LGEGGMSFV) and Lys-69. Catalysis depends on Asp-215, which acts as the Proton acceptor.

The protein belongs to the protein kinase superfamily. Ser/Thr protein kinase family.

It localises to the vacuole membrane. It carries out the reaction L-seryl-[protein] + ATP = O-phospho-L-seryl-[protein] + ADP + H(+). The enzyme catalyses L-threonyl-[protein] + ATP = O-phospho-L-threonyl-[protein] + ADP + H(+). Serine/threonine-protein kinase involved in vacuolar processing and morphology. The protein is Serine/threonine-protein kinase ENV7 (ENV7) of Saccharomyces cerevisiae (strain ATCC 204508 / S288c) (Baker's yeast).